The primary structure comprises 355 residues: UDP-N-acetylglucosamine--N-acetylmuramyl-(pentapeptide) pyrophosphoryl-undecaprenol N-acetylglucosamine transferase (355 aa).

Residues 14–16 (TGG), Asn-126, Arg-162, Ser-190, Ile-243, 262–267 (ALTVSE), and Gln-287 contribute to the UDP-N-acetyl-alpha-D-glucosamine site.

This sequence belongs to the glycosyltransferase 28 family. MurG subfamily.

The protein resides in the cell inner membrane. It carries out the reaction di-trans,octa-cis-undecaprenyl diphospho-N-acetyl-alpha-D-muramoyl-L-alanyl-D-glutamyl-meso-2,6-diaminopimeloyl-D-alanyl-D-alanine + UDP-N-acetyl-alpha-D-glucosamine = di-trans,octa-cis-undecaprenyl diphospho-[N-acetyl-alpha-D-glucosaminyl-(1-&gt;4)]-N-acetyl-alpha-D-muramoyl-L-alanyl-D-glutamyl-meso-2,6-diaminopimeloyl-D-alanyl-D-alanine + UDP + H(+). It participates in cell wall biogenesis; peptidoglycan biosynthesis. Functionally, cell wall formation. Catalyzes the transfer of a GlcNAc subunit on undecaprenyl-pyrophosphoryl-MurNAc-pentapeptide (lipid intermediate I) to form undecaprenyl-pyrophosphoryl-MurNAc-(pentapeptide)GlcNAc (lipid intermediate II). The sequence is that of UDP-N-acetylglucosamine--N-acetylmuramyl-(pentapeptide) pyrophosphoryl-undecaprenol N-acetylglucosamine transferase from Vibrio vulnificus (strain YJ016).